Here is a 261-residue protein sequence, read N- to C-terminus: Short-chain dehydrogenase/reductase AFUA_1G00990 (261 aa).

Leucine 19, aspartate 67, asparagine 94, tyrosine 169, lysine 173, and threonine 213 together coordinate NADP(+). Catalysis depends on tyrosine 169, which acts as the Proton donor. The active-site Lowers pKa of active site Tyr is lysine 173.

The protein belongs to the short-chain dehydrogenases/reductases (SDR) family.

Short-chain dehydrogenase/reductase; part of the gene cluster that mediates the biosynthesis of fumigermin that inhibits germination of spores of the inducing S.rapamycinicus, and thus helps the fungus to defend resources in the shared habitat against a bacterial competitor. The partially reducing polyketide synthase fngA alone is sufficient for the production of fumigermin. FgnA catalyzes the condensation of 3 malonyl-CoA units to an acetyl-CoA starter, and 3 methylations to yield fumigermin. It is remarkable that the five cluster genes including fgnA are conserved in distantly related fungi, supporting the assumption of a fumigermin cluster; it is thus possible that originally all five genes were functional, but that the genes encoding tailoring enzymes became inactive from mutations, similar to the case of the fgnA gene in strains A1163 and Af293. The sequence is that of Short-chain dehydrogenase/reductase AFUA_1G00990 from Aspergillus fumigatus (strain ATCC MYA-4609 / CBS 101355 / FGSC A1100 / Af293) (Neosartorya fumigata).